The following is a 935-amino-acid chain: Isoleucine--tRNA ligase (935 aa).

The short motif at 58–68 (PYANGSIHVGH) is the 'HIGH' region element. Glu-558 provides a ligand contact to L-isoleucyl-5'-AMP. Residues 599–603 (KMSKS) carry the 'KMSKS' region motif. ATP is bound at residue Lys-602. Zn(2+)-binding residues include Cys-897, Cys-900, Cys-917, and Cys-920.

Belongs to the class-I aminoacyl-tRNA synthetase family. IleS type 1 subfamily. As to quaternary structure, monomer. The cofactor is Zn(2+).

Its subcellular location is the cytoplasm. It catalyses the reaction tRNA(Ile) + L-isoleucine + ATP = L-isoleucyl-tRNA(Ile) + AMP + diphosphate. Its function is as follows. Catalyzes the attachment of isoleucine to tRNA(Ile). As IleRS can inadvertently accommodate and process structurally similar amino acids such as valine, to avoid such errors it has two additional distinct tRNA(Ile)-dependent editing activities. One activity is designated as 'pretransfer' editing and involves the hydrolysis of activated Val-AMP. The other activity is designated 'posttransfer' editing and involves deacylation of mischarged Val-tRNA(Ile). The protein is Isoleucine--tRNA ligase of Francisella tularensis subsp. tularensis (strain WY96-3418).